The sequence spans 332 residues: 2,3-diketo-L-gulonate reductase (332 aa).

Histidine 44 acts as the Proton donor in catalysis. NAD(+)-binding positions include 168–174 (ITMVDMS), 224–225 (WK), and 304–306 (GHE).

This sequence belongs to the LDH2/MDH2 oxidoreductase family. DlgD subfamily. Homodimer.

Its subcellular location is the cytoplasm. It catalyses the reaction 3-dehydro-L-gulonate + NAD(+) = 2,3-dioxo-L-gulonate + NADH + H(+). It carries out the reaction 3-dehydro-L-gulonate + NADP(+) = 2,3-dioxo-L-gulonate + NADPH + H(+). Its function is as follows. Catalyzes the reduction of 2,3-diketo-L-gulonate in the presence of NADH, to form 3-keto-L-gulonate. The sequence is that of 2,3-diketo-L-gulonate reductase from Salmonella newport (strain SL254).